The following is a 445-amino-acid chain: Glycine--tRNA ligase (445 aa).

Positions 97 and 145 each coordinate substrate. ATP is bound by residues 177 to 179 (RNE), 187 to 192 (FRTCEF), 262 to 263 (EV), and 308 to 311 (GLTR). A substrate-binding site is contributed by 192-196 (FEQME). 304–308 (ETSAG) lines the substrate pocket.

The protein belongs to the class-II aminoacyl-tRNA synthetase family. In terms of assembly, homodimer.

It localises to the cytoplasm. The catalysed reaction is tRNA(Gly) + glycine + ATP = glycyl-tRNA(Gly) + AMP + diphosphate. Functionally, catalyzes the attachment of glycine to tRNA(Gly). This chain is Glycine--tRNA ligase, found in Borrelia garinii subsp. bavariensis (strain ATCC BAA-2496 / DSM 23469 / PBi) (Borreliella bavariensis).